An 89-amino-acid polypeptide reads, in one-letter code: Large ribosomal subunit protein eL34 (89 aa).

The tract at residues 41–69 (RPLNGVPRGRPSELRKLPKTAKRPERPYP) is disordered. Residues 50 to 66 (RPSELRKLPKTAKRPER) show a composition bias toward basic and acidic residues.

This sequence belongs to the eukaryotic ribosomal protein eL34 family.

This is Large ribosomal subunit protein eL34 from Thermococcus gammatolerans (strain DSM 15229 / JCM 11827 / EJ3).